The sequence spans 162 residues: NADH-quinone oxidoreductase subunit I 2 (162 aa).

4Fe-4S ferredoxin-type domains are found at residues 52–82 (LRRYPNGEERCIACKLCEAICPAQAITIEAG) and 93–122 (VRYDIDMVKCIYCGLCQEACPVDAIVEGPN). 8 residues coordinate [4Fe-4S] cluster: Cys-62, Cys-65, Cys-68, Cys-72, Cys-102, Cys-105, Cys-108, and Cys-112.

Belongs to the complex I 23 kDa subunit family. As to quaternary structure, NDH-1 is composed of 14 different subunits. Subunits NuoA, H, J, K, L, M, N constitute the membrane sector of the complex. [4Fe-4S] cluster serves as cofactor.

The protein resides in the cell inner membrane. It catalyses the reaction a quinone + NADH + 5 H(+)(in) = a quinol + NAD(+) + 4 H(+)(out). Functionally, NDH-1 shuttles electrons from NADH, via FMN and iron-sulfur (Fe-S) centers, to quinones in the respiratory chain. The immediate electron acceptor for the enzyme in this species is believed to be ubiquinone. Couples the redox reaction to proton translocation (for every two electrons transferred, four hydrogen ions are translocated across the cytoplasmic membrane), and thus conserves the redox energy in a proton gradient. This Rhodopseudomonas palustris (strain HaA2) protein is NADH-quinone oxidoreductase subunit I 2.